Consider the following 739-residue polypeptide: Elongation factor 2 (739 aa).

The tr-type G domain maps to Arg-19–Ile-261. Residues Ala-28–Thr-35, Asp-94–His-98, and Asn-148–Asp-151 each bind GTP. Residue His-603 is modified to Diphthamide.

It belongs to the TRAFAC class translation factor GTPase superfamily. Classic translation factor GTPase family. EF-G/EF-2 subfamily.

The protein resides in the cytoplasm. Its function is as follows. Catalyzes the GTP-dependent ribosomal translocation step during translation elongation. During this step, the ribosome changes from the pre-translocational (PRE) to the post-translocational (POST) state as the newly formed A-site-bound peptidyl-tRNA and P-site-bound deacylated tRNA move to the P and E sites, respectively. Catalyzes the coordinated movement of the two tRNA molecules, the mRNA and conformational changes in the ribosome. The chain is Elongation factor 2 from Korarchaeum cryptofilum (strain OPF8).